Here is a 149-residue protein sequence, read N- to C-terminus: MTRDMPDQLGRETPRDGTVLAFDYGEKKIGVALGNFITRQASALTILPNVTVEARFDAVGELIRQWTPVRLVVGMPVNPEAGPDDEEQPSMRLARRFGNQLNGRFNLPVEWVDERYSSRAAAMAGAKRGALDAEAARIILQQYFDELPL.

Belongs to the YqgF nuclease family.

It localises to the cytoplasm. Its function is as follows. Could be a nuclease involved in processing of the 5'-end of pre-16S rRNA. In Cupriavidus metallidurans (strain ATCC 43123 / DSM 2839 / NBRC 102507 / CH34) (Ralstonia metallidurans), this protein is Putative pre-16S rRNA nuclease.